A 94-amino-acid chain; its full sequence is Probable small nuclear ribonucleoprotein E (94 aa).

A Sm domain is found at Ile17 to Thr92.

It belongs to the snRNP Sm proteins family. As to quaternary structure, core component of the spliceosomal U1, U2, U4 and U5 small nuclear ribonucleoproteins (snRNPs), the building blocks of the spliceosome. Interacts with the SMN complex.

The protein resides in the nucleus. It is found in the cytoplasm. Its subcellular location is the cytosol. Functionally, plays a role in pre-mRNA splicing as a core component of the spliceosomal U1, U2, U4 and U5 small nuclear ribonucleoproteins (snRNPs), the building blocks of the spliceosome. This is Probable small nuclear ribonucleoprotein E (SmE) from Drosophila melanogaster (Fruit fly).